We begin with the raw amino-acid sequence, 240 residues long: Glyceraldehyde 3-phosphate phosphatase (240 aa).

Belongs to the HAD-like hydrolase superfamily. Mg(2+) is required as a cofactor.

In terms of biological role, catalyzes the dephosphorylation of D,L-glyceraldehyde 3-phosphate in vitro. The polypeptide is Glyceraldehyde 3-phosphate phosphatase (Pyrococcus furiosus (strain ATCC 43587 / DSM 3638 / JCM 8422 / Vc1)).